Here is a 265-residue protein sequence, read N- to C-terminus: MMQRSWQSWRRGLTLGLASRRSYVASVEAPSTPPEELDAFERDYLKQRIEITPFQKLLLGAGSSIASLLDPHRHDMIACLGETTGESALWNILDSMQATEEGRRILKDKPRINTKTIDFKRLEALPPNTFGATYAKFLKDNKVTPDSRMEVRFLEDPKLAYIMTRYRECHDLVHAALDMPTNMLCEVAVKWVEALNTGLPMCYGAAVFGAVRLRPRQRREYLKRYLPWAIENGKGMRPLMPIYWEQRWEQNIHELRCELGIKPLQ.

The N-terminal 30 residues, 1–30 (MMQRSWQSWRRGLTLGLASRRSYVASVEAP), are a transit peptide targeting the mitochondrion. Residues His-170, Asp-171, His-174, and Glu-186 each coordinate Zn(2+).

Belongs to the COQ4 family. As to quaternary structure, component of a multi-subunit COQ enzyme complex. Zn(2+) is required as a cofactor.

The protein localises to the mitochondrion inner membrane. It catalyses the reaction a 4-hydroxy-3-methoxy-5-(all-trans-polyprenyl)benzoate + H(+) = a 2-methoxy-6-(all-trans-polyprenyl)phenol + CO2. The protein operates within cofactor biosynthesis; ubiquinone biosynthesis. Lyase that catalyzes the C1-decarboxylation of 4-hydroxy-3-methoxy-5-(all-trans-polyprenyl)benzoic acid into 2-methoxy-6-(all-trans-polyprenyl)phenol during ubiquinone biosynthesis. The polypeptide is Ubiquinone biosynthesis protein COQ4 homolog, mitochondrial (Drosophila virilis (Fruit fly)).